Here is a 514-residue protein sequence, read N- to C-terminus: Multifunctional alkaline phosphatase superfamily protein PehA (514 aa).

Residues aspartate 12, cysteine 57, aspartate 324, and histidine 325 each contribute to the Mn(2+) site. Cysteine 57 serves as the catalytic Nucleophile. Cysteine 57 carries the post-translational modification 3-oxoalanine (Cys).

The protein belongs to the alkaline phosphatase superfamily. As to quaternary structure, homotetramer. Mn(2+) serves as cofactor. The conversion to 3-oxoalanine (also known as C-formylglycine, FGly), of a serine or cysteine residue in prokaryotes and of a cysteine residue in eukaryotes, is critical for catalytic activity. Phosphate triester hydrolytic activity is retained with unmodified cysteine acting as a nucleophile.

With respect to regulation, anions including Cl(-) and CH3COO(-), and SO4(2-) salts stimulate activity 20-40% at 100 mM. In terms of biological role, hydrolytic enzyme with a broad substrate specificity acting on phosphate diesters and phosphonate monoesters. Hydrolyzes phosphate mono- and triesters, sulfate monoesters and sulfonate monoesters. Hydrolyzes glyphosate monoesters. Does not hydrolyze DNA or cGMP. Hydrolyzes glyceryl glyphosate, but this substrate has a much lower affinity than the glyphosate monoesters. This is Multifunctional alkaline phosphatase superfamily protein PehA from Trinickia caryophylli (Paraburkholderia caryophylli).